Here is a 492-residue protein sequence, read N- to C-terminus: Transcription factor IIIB 60 kDa subunit (492 aa).

A TFIIB-type zinc finger spans residues 1-30; the sequence is MGCPNCGSTTFESDTASGNTYCTQCGVVVE. Positions 3, 6, 22, and 25 each coordinate Zn(2+). A disordered region spans residues 440–468; sequence QPRKRRRYRPRDSTSDGIADTAAESAKEM.

The protein belongs to the TFIIB family. As to quaternary structure, TFIIIB comprises the TATA-binding protein (TBP), the B-related factor (BRF) and a third subunit (Potential). Interacts with maf1.

Its subcellular location is the nucleus. Functionally, general activator of RNA polymerase III transcription. This chain is Transcription factor IIIB 60 kDa subunit (brf1), found in Schizosaccharomyces pombe (strain 972 / ATCC 24843) (Fission yeast).